We begin with the raw amino-acid sequence, 320 residues long: ATP-dependent 6-phosphofructokinase (320 aa).

Gly12 contributes to the ATP binding site. ADP-binding positions include 22-26 (RGVVR) and 55-60 (RYSVSD). ATP is bound by residues 73–74 (RF) and 103–106 (GDGS). Asp104 is a binding site for Mg(2+). 126-128 (TID) serves as a coordination point for substrate. Asp128 acts as the Proton acceptor in catalysis. Arg155 contacts ADP. Substrate is bound by residues Arg163 and 170–172 (MGR). ADP contacts are provided by residues 186-188 (GCE), Lys212, and 214-216 (KKH). Substrate is bound by residues Glu223, Arg244, and 250-253 (HIQR).

The protein belongs to the phosphofructokinase type A (PFKA) family. ATP-dependent PFK group I subfamily. Prokaryotic clade 'B1' sub-subfamily. In terms of assembly, homotetramer. It depends on Mg(2+) as a cofactor.

Its subcellular location is the cytoplasm. It catalyses the reaction beta-D-fructose 6-phosphate + ATP = beta-D-fructose 1,6-bisphosphate + ADP + H(+). Its pathway is carbohydrate degradation; glycolysis; D-glyceraldehyde 3-phosphate and glycerone phosphate from D-glucose: step 3/4. Allosterically activated by ADP and other diphosphonucleosides, and allosterically inhibited by phosphoenolpyruvate. In terms of biological role, catalyzes the phosphorylation of D-fructose 6-phosphate to fructose 1,6-bisphosphate by ATP, the first committing step of glycolysis. The polypeptide is ATP-dependent 6-phosphofructokinase (Pectobacterium carotovorum subsp. carotovorum (strain PC1)).